Consider the following 216-residue polypeptide: DegV domain-containing protein UU190 (216 aa).

One can recognise a DegV domain in the interval 1-215; it reads MLWKNLDELF…LNNFAILIEA (215 aa). Serine 26 contacts hexadecanoate.

Functionally, may bind long-chain fatty acids, such as palmitate, and may play a role in lipid transport or fatty acid metabolism. This is DegV domain-containing protein UU190 from Ureaplasma parvum serovar 3 (strain ATCC 700970).